The sequence spans 433 residues: ATP-dependent protease ATPase subunit HslU (433 aa).

ATP contacts are provided by residues Val-18, 60-65 (GVGKTE), Asp-246, Glu-311, and Arg-383.

Belongs to the ClpX chaperone family. HslU subfamily. As to quaternary structure, a double ring-shaped homohexamer of HslV is capped on each side by a ring-shaped HslU homohexamer. The assembly of the HslU/HslV complex is dependent on binding of ATP.

It is found in the cytoplasm. Its function is as follows. ATPase subunit of a proteasome-like degradation complex; this subunit has chaperone activity. The binding of ATP and its subsequent hydrolysis by HslU are essential for unfolding of protein substrates subsequently hydrolyzed by HslV. HslU recognizes the N-terminal part of its protein substrates and unfolds these before they are guided to HslV for hydrolysis. This Rhodopseudomonas palustris (strain HaA2) protein is ATP-dependent protease ATPase subunit HslU.